We begin with the raw amino-acid sequence, 861 residues long: Probable beta-glucosidase A (861 aa).

An N-terminal signal peptide occupies residues Met1–Ala19. 3 N-linked (GlcNAc...) asparagine glycosylation sites follow: Asn62, Asn212, and Asn253. Asp281 is an active-site residue. N-linked (GlcNAc...) asparagine glycosylation is found at Asn316, Asn323, Asn355, Asn443, Asn524, Asn543, Asn565, Asn669, Asn713, and Asn846.

This sequence belongs to the glycosyl hydrolase 3 family.

It is found in the secreted. It catalyses the reaction Hydrolysis of terminal, non-reducing beta-D-glucosyl residues with release of beta-D-glucose.. It functions in the pathway glycan metabolism; cellulose degradation. Functionally, beta-glucosidases are one of a number of cellulolytic enzymes involved in the degradation of cellulosic biomass. Catalyzes the last step releasing glucose from the inhibitory cellobiose. The sequence is that of Probable beta-glucosidase A (bglA) from Aspergillus flavus (strain ATCC 200026 / FGSC A1120 / IAM 13836 / NRRL 3357 / JCM 12722 / SRRC 167).